The primary structure comprises 166 residues: Small ribosomal subunit protein cS23z (166 aa).

This sequence belongs to the chloroplast-specific ribosomal protein cS23 family. Part of the 30S ribosomal subunit.

The protein localises to the plastid. It localises to the chloroplast. Its function is as follows. Component of the chloroplast ribosome (chloro-ribosome), a dedicated translation machinery responsible for the synthesis of chloroplast genome-encoded proteins, including proteins of the transcription and translation machinery and components of the photosynthetic apparatus. In Arabidopsis thaliana (Mouse-ear cress), this protein is Small ribosomal subunit protein cS23z.